Reading from the N-terminus, the 224-residue chain is Large ribosomal subunit protein uL3 (224 aa).

Glutamine 158 bears the N5-methylglutamine mark.

This sequence belongs to the universal ribosomal protein uL3 family. Part of the 50S ribosomal subunit. Forms a cluster with proteins L14 and L19. Methylated by PrmB.

One of the primary rRNA binding proteins, it binds directly near the 3'-end of the 23S rRNA, where it nucleates assembly of the 50S subunit. This Acidovorax sp. (strain JS42) protein is Large ribosomal subunit protein uL3.